The primary structure comprises 312 residues: Carbonic anhydrase 4 (312 aa).

Residues 1-18 (MRMLLALLALSAARPSAS) form the signal peptide. Positions 21 to 285 (SHWCYEVQAE…LGQRTVIKSG (265 aa)) constitute an Alpha-carbonic anhydrase domain. Disulfide bonds link cysteine 24–cysteine 36 and cysteine 46–cysteine 229. The active-site Proton donor/acceptor is histidine 88. Histidine 115, histidine 117, and histidine 140 together coordinate Zn(2+). 225–226 (TT) contributes to the substrate binding site. Serine 284 is lipidated: GPI-anchor amidated serine. The propeptide at 285-312 (GAPGRPLPWALPALLGPMLACLLAGFLR) is removed in mature form.

It belongs to the alpha-carbonic anhydrase family. In terms of assembly, interacts with SLC4A4. Zn(2+) is required as a cofactor. As to expression, expressed in the endothelium of the choriocapillaris in eyes (at protein level). Not expressed in the retinal epithelium at detectable levels.

Its subcellular location is the cell membrane. The enzyme catalyses hydrogencarbonate + H(+) = CO2 + H2O. Its activity is regulated as follows. Activated by histamine, L-adrenaline, D-phenylalanine, L- and D-histidine. Inhibited by coumarins, saccharin, sulfonamide derivatives such as acetazolamide and Foscarnet (phosphonoformate trisodium salt). Functionally, catalyzes the reversible hydration of carbon dioxide into bicarbonate and protons and thus is essential to maintaining intracellular and extracellular pH. May stimulate the sodium/bicarbonate transporter activity of SLC4A4 that acts in pH homeostasis. It is essential for acid overload removal from the retina and retina epithelium, and acid release in the choriocapillaris in the choroid. This Homo sapiens (Human) protein is Carbonic anhydrase 4.